We begin with the raw amino-acid sequence, 493 residues long: Putative MgpC-like protein MPN_414 (493 aa).

Over residues 1–14 (MKPTSLPKNFTNNP) the composition is skewed to polar residues. Disordered stretches follow at residues 1-92 (MKPT…GHNS) and 441-493 (KSAR…SGNH). Basic and acidic residues-rich tracts occupy residues 25-34 (DNGRAYRKLN) and 44-56 (DSTK…DKDG). 2 stretches are compositionally biased toward polar residues: residues 72–92 (VSST…GHNS) and 445–472 (ENAQ…SPCR). Residues 482–493 (RVTEEERSSGNH) are compositionally biased toward basic and acidic residues.

It belongs to the MgpC family.

The sequence is that of Putative MgpC-like protein MPN_414 from Mycoplasma pneumoniae (strain ATCC 29342 / M129 / Subtype 1) (Mycoplasmoides pneumoniae).